The chain runs to 196 residues: DnaA initiator-associating protein DiaA (196 aa).

The SIS domain maps to 34-196; the sequence is LVHSLLNGNK…DNTLFPHQDD (163 aa).

It belongs to the SIS family. DiaA subfamily. Homotetramer; dimer of dimers.

Functionally, required for the timely initiation of chromosomal replication via direct interactions with the DnaA initiator protein. This is DnaA initiator-associating protein DiaA from Citrobacter koseri (strain ATCC BAA-895 / CDC 4225-83 / SGSC4696).